A 529-amino-acid chain; its full sequence is Glucocorticoid modulatory element-binding protein 2 (529 aa).

Positions 80-162 constitute an SAND domain; it reads EEGENLEAEI…RKIMDSGELD (83 aa). Cys109 lines the Zn(2+) pocket. 4 residues coordinate DNA: Lys135, Lys139, Lys142, and Arg153. Lys154 is covalently cross-linked (Glycyl lysine isopeptide (Lys-Gly) (interchain with G-Cter in SUMO1); alternate). Lys154 participates in a covalent cross-link: Glycyl lysine isopeptide (Lys-Gly) (interchain with G-Cter in SUMO2); alternate. Residues His166, Cys170, and Cys174 each contribute to the Zn(2+) site. The stretch at 244 to 347 forms a coiled coil; that stretch reads LLDEVIQEFQ…HLSNVLMTLT (104 aa). Ser372 is modified (phosphoserine).

In terms of assembly, homodimer, and heterodimer of GMEB1 and GMEB2. Interacts with the glucocorticoid receptor (NR3C1). May interact with CREB-binding protein (CBP).

It localises to the nucleus. It is found in the cytoplasm. Its function is as follows. Trans-acting factor that binds to glucocorticoid modulatory elements (GME) present in the TAT (tyrosine aminotransferase) promoter and increases sensitivity to low concentrations of glucocorticoids. Also binds to the transferrin receptor promoter. The polypeptide is Glucocorticoid modulatory element-binding protein 2 (Gmeb2) (Rattus norvegicus (Rat)).